The primary structure comprises 425 residues: Protein CLP1 homolog (425 aa).

ATP-binding positions include glutamate 18, lysine 59, and 121-126 (DVGKST).

Belongs to the Clp1 family. Clp1 subfamily.

It localises to the nucleus. Required for endonucleolytic cleavage during polyadenylation-dependent pre-mRNA 3'-end formation. The sequence is that of Protein CLP1 homolog (cbc) from Drosophila grimshawi (Hawaiian fruit fly).